The sequence spans 333 residues: Holliday junction branch migration complex subunit RuvB (333 aa).

A large ATPase domain (RuvB-L) region spans residues methionine 1–tyrosine 181. Residues leucine 20, arginine 21, glycine 62, lysine 65, threonine 66, threonine 67, glutamate 128–phenylalanine 130, arginine 171, tyrosine 181, and arginine 218 contribute to the ATP site. Threonine 66 lines the Mg(2+) pocket. The small ATPAse domain (RuvB-S) stretch occupies residues glutamine 182–aspartate 252. Positions glutamine 255–histidine 333 are head domain (RuvB-H). Residues arginine 291, arginine 310, arginine 312, and arginine 315 each coordinate DNA.

It belongs to the RuvB family. In terms of assembly, homohexamer. Forms an RuvA(8)-RuvB(12)-Holliday junction (HJ) complex. HJ DNA is sandwiched between 2 RuvA tetramers; dsDNA enters through RuvA and exits via RuvB. An RuvB hexamer assembles on each DNA strand where it exits the tetramer. Each RuvB hexamer is contacted by two RuvA subunits (via domain III) on 2 adjacent RuvB subunits; this complex drives branch migration. In the full resolvosome a probable DNA-RuvA(4)-RuvB(12)-RuvC(2) complex forms which resolves the HJ.

The protein localises to the cytoplasm. The catalysed reaction is ATP + H2O = ADP + phosphate + H(+). In terms of biological role, the RuvA-RuvB-RuvC complex processes Holliday junction (HJ) DNA during genetic recombination and DNA repair, while the RuvA-RuvB complex plays an important role in the rescue of blocked DNA replication forks via replication fork reversal (RFR). RuvA specifically binds to HJ cruciform DNA, conferring on it an open structure. The RuvB hexamer acts as an ATP-dependent pump, pulling dsDNA into and through the RuvAB complex. RuvB forms 2 homohexamers on either side of HJ DNA bound by 1 or 2 RuvA tetramers; 4 subunits per hexamer contact DNA at a time. Coordinated motions by a converter formed by DNA-disengaged RuvB subunits stimulates ATP hydrolysis and nucleotide exchange. Immobilization of the converter enables RuvB to convert the ATP-contained energy into a lever motion, pulling 2 nucleotides of DNA out of the RuvA tetramer per ATP hydrolyzed, thus driving DNA branch migration. The RuvB motors rotate together with the DNA substrate, which together with the progressing nucleotide cycle form the mechanistic basis for DNA recombination by continuous HJ branch migration. Branch migration allows RuvC to scan DNA until it finds its consensus sequence, where it cleaves and resolves cruciform DNA. The polypeptide is Holliday junction branch migration complex subunit RuvB (Streptococcus equi subsp. zooepidemicus (strain MGCS10565)).